We begin with the raw amino-acid sequence, 230 residues long: MDLKYLNQKEAIDVDQELFTEYKFSVDQLMELAGLSCAHAVAKCFPAEKHPRILVCCGPGNNGGDGLVAARHLSLMGYTPTIYYPKPTAKPLFENLSHQCQMMGICGVKECPSVESAAANYDLILDALFGFSFKPPVRADFVAVVELMQQTKLPIASVDIPSGWDVEKGKLTECDVEPALLISLTAPKLCARQFRGEHHYLGGRFVPPALQRKYELNLPVYPGNELCVKL.

The 208-residue stretch at 11 to 218 (AIDVDQELFT…ALQRKYELNL (208 aa)) folds into the YjeF N-terminal domain. 61-65 (NNGGD) contacts (6S)-NADPHX. Residues N62 and D126 each contribute to the K(+) site. Residues 130 to 136 (GFSFKPP) and D159 each bind (6S)-NADPHX. Position 162 (S162) interacts with K(+).

Belongs to the NnrE/AIBP family. The cofactor is K(+).

It catalyses the reaction (6R)-NADHX = (6S)-NADHX. It carries out the reaction (6R)-NADPHX = (6S)-NADPHX. Its function is as follows. Catalyzes the epimerization of the S- and R-forms of NAD(P)HX, a damaged form of NAD(P)H that is a result of enzymatic or heat-dependent hydration. This is a prerequisite for the S-specific NAD(P)H-hydrate dehydratase to allow the repair of both epimers of NAD(P)HX. This chain is NAD(P)H-hydrate epimerase, found in Drosophila erecta (Fruit fly).